A 185-amino-acid chain; its full sequence is Ribosome-recycling factor (185 aa).

It belongs to the RRF family.

Its subcellular location is the cytoplasm. In terms of biological role, responsible for the release of ribosomes from messenger RNA at the termination of protein biosynthesis. May increase the efficiency of translation by recycling ribosomes from one round of translation to another. The chain is Ribosome-recycling factor from Thermosipho africanus (strain TCF52B).